The chain runs to 434 residues: A-adding tRNA nucleotidyltransferase (434 aa).

Residue 20-23 (GAVR) participates in ATP binding. 2 residues coordinate Mg(2+): aspartate 33 and aspartate 35. ATP is bound by residues 91 to 92 (RD), asparagine 96, 132 to 141 (DPLRAWRAAR), and arginine 177. In terms of domain architecture, HD spans 227–339 (VFEHGVEALH…ELLPDLLSLM (113 aa)).

Belongs to the tRNA nucleotidyltransferase/poly(A) polymerase family. Mg(2+) serves as cofactor.

The catalysed reaction is a tRNA with a 3' CC end + ATP = a tRNA with a 3' CCA end + diphosphate. Functionally, tRNA nucleotidyltransferase involved in the synthesis of the tRNA CCA terminus. Adds the terminal adenosine residue to tRNA. In Deinococcus radiodurans (strain ATCC 13939 / DSM 20539 / JCM 16871 / CCUG 27074 / LMG 4051 / NBRC 15346 / NCIMB 9279 / VKM B-1422 / R1), this protein is A-adding tRNA nucleotidyltransferase.